The sequence spans 80 residues: Exodeoxyribonuclease 7 small subunit (80 aa).

The protein belongs to the XseB family. In terms of assembly, heterooligomer composed of large and small subunits.

It is found in the cytoplasm. It catalyses the reaction Exonucleolytic cleavage in either 5'- to 3'- or 3'- to 5'-direction to yield nucleoside 5'-phosphates.. Its function is as follows. Bidirectionally degrades single-stranded DNA into large acid-insoluble oligonucleotides, which are then degraded further into small acid-soluble oligonucleotides. This Rickettsia africae (strain ESF-5) protein is Exodeoxyribonuclease 7 small subunit.